The following is a 160-amino-acid chain: Nucleotide-binding protein CJA_2652 (160 aa).

This sequence belongs to the YajQ family.

In terms of biological role, nucleotide-binding protein. The protein is Nucleotide-binding protein CJA_2652 of Cellvibrio japonicus (strain Ueda107) (Pseudomonas fluorescens subsp. cellulosa).